Reading from the N-terminus, the 86-residue chain is RNA-binding protein Hfq (86 aa).

A Sm domain is found at 9–68; it reads DIFLNVLRRERIQVSIYLFNGIKLQGHIESFDQFVIVLKNTISQMVYKHAVSTIVPSKFV.

The protein belongs to the Hfq family. Homohexamer.

Its function is as follows. RNA chaperone that binds small regulatory RNA (sRNAs) and mRNAs to facilitate mRNA translational regulation in response to envelope stress, environmental stress and changes in metabolite concentrations. Also binds with high specificity to tRNAs. This chain is RNA-binding protein Hfq, found in Baumannia cicadellinicola subsp. Homalodisca coagulata.